The chain runs to 582 residues: Tetratricopeptide repeat protein 24 (582 aa).

The disordered stretch occupies residues 1–31 (MSSPNPEDVPRRPEPEPSSSNKKKKKRKWLR). TPR repeat units lie at residues 36–69 (IQALTRAGHGALQAGQNHEALNNFQRAFLLASKA), 79–112 (QACAFNLGAAYVETGDPARGLELLLRAHPEEKAQ), 117–150 (GDQCFNVALAYHALGELPQALAWYHRALGHYQPQ), 154–187 (GEAWAKMGACYQALGQPELAAHCLQEASQAYAQE), 236–271 (GHLYNDLGLGYSQLQLFPLAVEAFLQALPLCWVPGE), 273–306 (ATVLRNLGMAHNALGNYQEAREFHQKAADLHGSV), 313–346 (GRSFGSLAFALSQLGDHKAARDNYLHALQAARDS), and 353–386 (WQACEGLGAAAARLGQYDQALKYYKEALAQCQKE). Disordered stretches follow at residues 418 to 481 (TSAP…RAGP) and 548 to 582 (VPNGPQANRSSRWPRESLSRSRQRRPMESGICTIV). A compositionally biased stretch (polar residues) spans 441–454 (GSSTAGVQHRSSSG). A compositionally biased stretch (basic and acidic residues) spans 462-472 (EGHQKKKEERS).

The protein is Tetratricopeptide repeat protein 24 (TTC24) of Homo sapiens (Human).